Here is a 169-residue protein sequence, read N- to C-terminus: Probable calcium-binding protein CML20 (169 aa).

The segment at 1–23 (MSSIYRTVSRKEKPRRHHGLTTQ) is disordered. EF-hand domains follow at residues 23-58 (QKKQEIKEAFELFDTDGSGTIDAKELNVAMRALGFE), 59-94 (MTEEQINKMIADVDKDGSGAIDFDEFVHMMTAKIGE), 96-131 (DTKEELTKAFQIIDLDKNGKISPDDIKRMAKDLGEN), and 132-167 (FTDAEIREMVEEADRDRDGEVNMDEFMRMMRRTAYG). 19 residues coordinate Ca(2+): Asp36, Asp38, Ser40, Thr42, Glu47, Asp72, Asp74, Ser76, Glu83, Asp109, Asp111, Asn113, Lys115, Asp120, Asp145, Asp147, Asp149, Glu151, and Glu156.

Interacts with TON1A and TON1B. Interacts with SAC3A and SAC3B. Interacts with UCH1 and UCH2.

Potential calcium sensor. The sequence is that of Probable calcium-binding protein CML20 from Arabidopsis thaliana (Mouse-ear cress).